The chain runs to 387 residues: TPR repeat-containing protein SYNPCC7002_A0425 (387 aa).

9 TPR repeats span residues 63–96, 97–130, 132–164, 166–198, 200–232, 233–266, 267–300, 302–334, and 336–368; these read LNAL…EANN, ARIH…EDDN, EFFN…QPNN, AYSL…DSNN, MALQ…RPND, AELR…STRD, SAMQ…DPQS, EAFA…SPTD, and AAFY…YQQR.

This chain is TPR repeat-containing protein SYNPCC7002_A0425, found in Picosynechococcus sp. (strain ATCC 27264 / PCC 7002 / PR-6) (Agmenellum quadruplicatum).